Reading from the N-terminus, the 417-residue chain is E3 ubiquitin-protein ligase RNF135 (417 aa).

The RING-type zinc-finger motif lies at C21–R67. Disordered stretches follow at residues E95–K118 and T143–S173. Coiled coils occupy residues T121–R145 and S180–V204. Polar residues predominate over residues T143–S164. A B30.2/SPRY domain is found at P225–T417.

Homodimer. Interacts (homodimer) with RIGI (double-stranded RNA-bound oligomeric form); involved in both RIGI ubiquitination, oligomerization into filaments associated with viral RNAs and the bridging of these filaments. Interacts with UBE2D3 and UBE2N; E2 ubiquitin ligases involved in RNF135-mediated ubiquitination of RIGI and activation of the RIG-I signaling pathway. Interacts with PCBP2. Ubiquitously expressed.

The protein resides in the cytoplasm. The protein localises to the stress granule. The enzyme catalyses S-ubiquitinyl-[E2 ubiquitin-conjugating enzyme]-L-cysteine + [acceptor protein]-L-lysine = [E2 ubiquitin-conjugating enzyme]-L-cysteine + N(6)-ubiquitinyl-[acceptor protein]-L-lysine.. It functions in the pathway protein modification; protein ubiquitination. E2-dependent E3 ubiquitin-protein ligase that functions as a RIGI coreceptor in the sensing of viral RNAs in cell cytoplasm and the activation of the antiviral innate immune response. Together with the UBE2D3, UBE2N and UB2V1 E2 ligases, catalyzes the 'Lys-63'-linked polyubiquitination of RIGI oligomerized on viral RNAs, an essential step in the activation of the RIG-I signaling pathway. Through a ubiquitin-independent parallel mechanism, which consists in bridging RIGI filaments forming on longer viral RNAs, further activates the RIG-I signaling pathway. This second mechanism that synergizes with the ubiquitin-dependent one would thereby allow an RNA length-dependent regulation of the RIG-I signaling pathway. Associated with the E2 ligase UBE2N, also constitutively synthesizes unanchored 'Lys-63'-linked polyubiquitin chains that may also activate the RIG-I signaling pathway. It is not involved in the innate immune response against DNA viruses. This is E3 ubiquitin-protein ligase RNF135 from Mus musculus (Mouse).